Reading from the N-terminus, the 1337-residue chain is Receptor-type tyrosine-protein phosphatase eta (1337 aa).

Residues 1 to 35 (MKPAAREARLPPRSPGLRWALPLLLLLLRLGQILC) form the signal peptide. The Extracellular portion of the chain corresponds to 36 to 975 (AGGTPSPIPD…LPQDPGVICG (940 aa)). Polar residues-rich tracts occupy residues 67–82 (SFHK…VETN) and 89–119 (SSGA…STGP). Residues 67–124 (SFHKQNGTGTPQVETNTSEDGESSGANDSLRTPEQGSNGTDGASQKTPSSTGPSPVFD) form a disordered region. N-linked (GlcNAc...) asparagine glycosylation is found at N72, N82, N93, N104, N142, N172, N192, N231, N258, N278, N342, N351, N376, N391, N396, N413, N431, N501, N525, N536, N582, N603, N618, N628, N637, N666, N669, N761, N772, N784, N790, N824, N910, and N937. Fibronectin type-III domains follow at residues 121–209 (PVFD…EPIP), 207–291 (PIPV…EGGL), 271–364 (NPYL…EFRT), 368–456 (QVFD…PPVP), 457–541 (VSDF…TVPS), 542–623 (AVFD…TAQY), 625–720 (RPSN…TDPA), 721–817 (SMAS…TDPP), and 816–902 (PPPP…SEVL). A disordered region spans residues 278-327 (NKTKGDPLGTEGGLDASNTERSRAGSPTAPVHDESLVGPVDPSSGQQSRD). The chain crosses the membrane as a helical span at residues 976 to 996 (AVFGCIFGALVIVTVGGFIFW). At 997-1337 (RKKRKDAKNN…TFGKTNGYIA (341 aa)) the chain is on the cytoplasmic side. S1009 carries the phosphoserine modification. Residues 1041–1298 (FAEEYEDLKL…VFLNQCVLDI (258 aa)) enclose the Tyrosine-protein phosphatase domain. Substrate is bound by residues D1205, 1239-1245 (CSAGVGR), and Q1283. The Phosphocysteine intermediate role is filled by C1239.

Belongs to the protein-tyrosine phosphatase family. Receptor class 3 subfamily. Monomer. Interacts with CTNNB1 (phosphorylated) and JUP (phosphorylated). Interacts with FLT3 (phosphorylated). Interacts with GAB1 and GRB2. N- and O-glycosylated. In terms of processing, N-glycosylated. In terms of tissue distribution, expressed in the promyelocytic cell line HL-60, the granulocyte-macrophage colony-stimulating factor-dependent leukemic cell line F-36P, and the IL3 and erythropoietin-dependent leukemic cell line F-36E. Expressed predominantly in epithelial cells and lymphocytes. Enhanced expression at high cell density. As to expression, expressed in the brain.

Its subcellular location is the cell membrane. The protein localises to the cell projection. It is found in the ruffle membrane. It localises to the cell junction. The protein resides in the secreted. Its subcellular location is the extracellular space. The catalysed reaction is O-phospho-L-tyrosyl-[protein] + H2O = L-tyrosyl-[protein] + phosphate. Tyrosine phosphatase which dephosphorylates or contributes to the dephosphorylation of CTNND1, FLT3, PDGFRB, MET, KDR, LYN, SRC, MAPK1, MAPK3, EGFR, TJP1, OCLN, PIK3R1 and PIK3R2. Plays a role in cell adhesion, migration, proliferation and differentiation. Has a role in megakaryocytes and platelet formation. Involved in vascular development. Regulator of macrophage adhesion and spreading. Positively affects cell-matrix adhesion. Positive regulator of platelet activation and thrombosis. Negative regulator of cell proliferation. Negative regulator of PDGF-stimulated cell migration; through dephosphorylation of PDGFR. Positive regulator of endothelial cell survival, as well as of VEGF-induced SRC and AKT activation; through KDR dephosphorylation. Negative regulator of EGFR signaling pathway; through EGFR dephosphorylation. Enhances the barrier function of epithelial junctions during reassembly. Negatively regulates T-cell receptor (TCR) signaling. Upon T-cell TCR activation, it is up-regulated and excluded from the immunological synapses, while upon T-cell-antigen presenting cells (APC) disengagement, it is no longer excluded and can dephosphorylate PLCG1 and LAT to down-regulate prolongation of signaling. Its function is as follows. Activates angiogenesis and cell migration. Downregulates the expression of the endothelial adhesion molecules ICAM1 and VCAM1. This Homo sapiens (Human) protein is Receptor-type tyrosine-protein phosphatase eta (PTPRJ).